A 938-amino-acid polypeptide reads, in one-letter code: Isoleucine--tRNA ligase (938 aa).

Residues 58–68 (PYANGSIHIGH) carry the 'HIGH' region motif. Position 561 (Glu-561) interacts with L-isoleucyl-5'-AMP. The short motif at 602 to 606 (KMSKS) is the 'KMSKS' region element. Lys-605 is an ATP binding site. Positions 901, 904, 921, and 924 each coordinate Zn(2+).

This sequence belongs to the class-I aminoacyl-tRNA synthetase family. IleS type 1 subfamily. As to quaternary structure, monomer. Zn(2+) serves as cofactor.

Its subcellular location is the cytoplasm. The enzyme catalyses tRNA(Ile) + L-isoleucine + ATP = L-isoleucyl-tRNA(Ile) + AMP + diphosphate. Catalyzes the attachment of isoleucine to tRNA(Ile). As IleRS can inadvertently accommodate and process structurally similar amino acids such as valine, to avoid such errors it has two additional distinct tRNA(Ile)-dependent editing activities. One activity is designated as 'pretransfer' editing and involves the hydrolysis of activated Val-AMP. The other activity is designated 'posttransfer' editing and involves deacylation of mischarged Val-tRNA(Ile). This chain is Isoleucine--tRNA ligase, found in Cronobacter sakazakii (strain ATCC BAA-894) (Enterobacter sakazakii).